A 776-amino-acid chain; its full sequence is MSINLTLDIYIYFLNNARSFCGKQRSKQLNFLCSKQYWRMNHVNVHREFHTSKKSCKWNRSEAHCSKHWHSSSNHGVHIGIVKLSTSAPKGLTKVSIHMSRIKSTLNSVSKAIFGSQNEMVSRLAQFKPSSRIFRKVSDRGWLKHKNVKQAIESLKNYSDKSAEKNSFAEQKSYFADKEEGSDKHSLYHYAYRITTRFGESFYFLANHINSYFKNKEKMSQIKEDRQLQDKPCLEESKSISPSPDILTDRPDSGPPLNVEDKLSSSTQLPEALPVSTKQSIANFLSRPTEGVQALVGGYIGGLVPKLKSDPKSQPEEEEEPSKTDEPICKDKKAEEKKRVLLQREKIIARVSIDNRTRALVQALRRTTDPKLCITRVEELTFHLLEFPEGKGVAVKEKIIPYLLRLRQIKDETLQAAVREILALIGYVDPVKGRGIRILAIDGGGTRGVVALQTLRKLVELTQKPIHQLFDYICGVSTGAILAFMLGLFHMPLDECEELYRKLGSDVFTQNVIVGTVKMSWSHAFYDSHTWEKILKDKVGSALMIETARDPLCPKVAAVSTIVNRGQTPKAFVFRNYGHFPGTNSHYLGGCQYKMWQAIRASSAAPGYFAEYALGNDLHQDGGLLLNNPSALALHECKCIWPDTPLECIVSLGTGRYESDVRNTTTYTSLKTKLSNVISSATDTEEVHIMLDGLLPADTYFRFNPVICENIPLDESRNEKLDQLQLEGMKYLERNDEKMKKLAKILSREKTTLQKISDWIKLKSDMYEGLPFFSKL.

Basic and acidic residues-rich tracts occupy residues Arg226–Lys238 and Leu307–Asp331. Disordered stretches follow at residues Arg226–Pro274 and Lys306–Asp331. One can recognise a PNPLA domain in the interval Leu439–Leu634. The GXGXXG signature appears at Gly443–Gly448. Residues Leu469 to Phe489 traverse the membrane as a helical segment. The GXSXG signature appears at Gly475–Gly479. Ser477 (nucleophile) is an active-site residue. The active-site Proton acceptor is the Asp621. The DGA/G motif lies at Asp621–Gly623. Lys730 carries the post-translational modification N6-succinyllysine.

Its subcellular location is the endoplasmic reticulum membrane. It is found in the microsome membrane. The protein localises to the mitochondrion membrane. It localises to the peroxisome membrane. It catalyses the reaction a 1,2-diacyl-sn-glycero-3-phosphocholine + H2O = a 1-acyl-sn-glycero-3-phosphocholine + a fatty acid + H(+). The enzyme catalyses a 1,2-diacyl-sn-glycero-3-phosphocholine + H2O = a 2-acyl-sn-glycero-3-phosphocholine + a fatty acid + H(+). The catalysed reaction is a 1,2-diacyl-sn-glycero-3-phosphoethanolamine + H2O = a 1-acyl-sn-glycero-3-phosphoethanolamine + a fatty acid + H(+). It carries out the reaction a 1-O-(1Z-alkenyl)-2-acyl-sn-glycero-3-phosphocholine + H2O = a 1-O-(1Z-alkenyl)-sn-glycero-3-phosphocholine + a fatty acid + H(+). It catalyses the reaction a 1-acyl-sn-glycero-3-phosphocholine + H2O = sn-glycerol 3-phosphocholine + a fatty acid + H(+). The enzyme catalyses 1-acyl-2-(9Z,12Z)-octadecadienoyl-sn-glycero-3-phosphocholine + H2O = a 1-acyl-sn-glycero-3-phosphocholine + (9Z,12Z)-octadecadienoate + H(+). The catalysed reaction is 1-acyl-2-(5Z,8Z,11Z,14Z-eicosatetraenoyl)-sn-glycero-3-phosphocholine + H2O = a 1-acyl-sn-glycero-3-phosphocholine + (5Z,8Z,11Z,14Z)-eicosatetraenoate + H(+). It carries out the reaction 1-hexadecanoyl-2-(5Z,8Z,11Z,14Z-eicosatetraenoyl)-sn-glycero-3-phosphocholine + H2O = 1-hexadecanoyl-sn-glycero-3-phosphocholine + (5Z,8Z,11Z,14Z)-eicosatetraenoate + H(+). It catalyses the reaction 1-octadecanoyl-2-(9Z-octadecenoyl)-sn-glycero-3-phosphocholine + H2O = 1-octadecanoyl-sn-glycero-3-phosphocholine + (9Z)-octadecenoate + H(+). The enzyme catalyses 1-hexadecanoyl-2-(9Z-octadecenoyl)-sn-glycero-3-phosphocholine + H2O = 1-hexadecanoyl-sn-glycero-3-phosphocholine + (9Z)-octadecenoate + H(+). The catalysed reaction is 1-hexadecanoyl-2-(9Z,12Z-octadecadienoyl)-sn-glycero-3-phosphocholine + H2O = (9Z,12Z)-octadecadienoate + 1-hexadecanoyl-sn-glycero-3-phosphocholine + H(+). It carries out the reaction 1-acyl-2-(9Z,12Z)-octadecadienoyl-sn-glycero-3-phosphoethanolamine + H2O = a 1-acyl-sn-glycero-3-phosphoethanolamine + (9Z,12Z)-octadecadienoate + H(+). It catalyses the reaction 1-acyl-2-(5Z,8Z,11Z,14Z)-eicosatetraenoyl-sn-glycero-3-phosphoethanolamine + H2O = a 1-acyl-sn-glycero-3-phosphoethanolamine + (5Z,8Z,11Z,14Z)-eicosatetraenoate + H(+). The enzyme catalyses 1-hexadecanoyl-2-(5Z,8Z,11Z,14Z-eicosatetraenoyl)-sn-glycero-3-phosphoethanolamine + H2O = 1-hexadecanoyl-sn-glycero-3-phosphoethanolamine + (5Z,8Z,11Z,14Z)-eicosatetraenoate + H(+). The catalysed reaction is 1-hexadecanoyl-2-(5Z,8Z,11Z,14Z-eicosatetraenoyl)-sn-glycero-3-phosphocholine + H2O = 2-(5Z,8Z,11Z,14Z)-eicosatetraenoyl-sn-glycero-3-phosphocholine + hexadecanoate + H(+). It carries out the reaction 1-octadecanoyl-2-(9Z-octadecenoyl)-sn-glycero-3-phosphocholine + H2O = 2-(9Z-octadecenoyl)-sn-glycero-3-phosphocholine + octadecanoate + H(+). It catalyses the reaction 1-hexadecanoyl-2-(4Z,7Z,10Z,13Z,16Z,19Z-docosahexaenoyl)-sn-glycero-3-phosphocholine + H2O = 2-(4Z,7Z,10Z,13Z,16Z,19Z-docosahexaenoyl)-sn-glycero-3-phosphocholine + hexadecanoate + H(+). The enzyme catalyses 1-O-(1Z)-hexadecenyl-2 (5Z,8Z,11Z,14Z)-eicosatetraenoyl-sn-glycero-3-phosphocholine + H2O = 1-(1Z-hexadecenyl)-sn-glycero-3-phosphocholine + (5Z,8Z,11Z,14Z)-eicosatetraenoate + H(+). The catalysed reaction is 1-O-(1Z-hexadecenyl)-2-(9Z-octadecenoyl)-sn-glycero-3-phosphocholine + H2O = 1-(1Z-hexadecenyl)-sn-glycero-3-phosphocholine + (9Z)-octadecenoate + H(+). It carries out the reaction 1-hexadecanoyl-sn-glycero-3-phosphocholine + H2O = sn-glycerol 3-phosphocholine + hexadecanoate + H(+). It catalyses the reaction 1',3'-bis-[1,2-di-(9Z,12Z-octadecadienoyl)-sn-glycero-3-phospho]-glycerol + H2O = 1'-[1,2-di-(9Z,12Z-octadecadienoyl)-sn-glycero-3-phospho]-3'-[1-(9Z,12Z-octadecadienoyl)-sn-glycero-3-phospho]-glycerol + (9Z,12Z)-octadecadienoate + H(+). The enzyme catalyses 1'-[1-acyl-2-(9-hydroxy-(10E,12Z)-octadecadienoyl)-sn-glycero-3-phospho]-3'-[1,2-diacyl-sn-glycero-3-phospho]-glycerol + H2O = 9-hydroxy-(10E,12Z)-octadecadienoate + 1'-[1,2-diacyl-sn-glycero-3-phospho],3'-[1-acyl-sn-glycero-3-phospho]-glycerol + H(+). The protein operates within phospholipid metabolism. Its activity is regulated as follows. Calcium-independent phospholipase. Functionally, calcium-independent and membrane-bound phospholipase, that catalyzes the esterolytic cleavage of fatty acids from glycerophospholipids to yield free fatty acids and lysophospholipids, hence regulating membrane physical properties and the release of lipid second messengers and growth factors. Hydrolyzes phosphatidylethanolamine, phosphatidylcholine and probably phosphatidylinositol with a possible preference for the former. Has also a broad substrate specificity in terms of fatty acid moieties, hydrolyzing saturated and mono-unsaturated fatty acids at nearly equal rates from either the sn-1 or sn-2 position in diacyl phosphatidylcholine. However, has a weak activity toward polyunsaturated fatty acids at the sn-2 position, and thereby favors the production of 2-arachidonoyl lysophosphatidylcholine, a key branch point metabolite in eicosanoid signaling. On the other hand, can produce arachidonic acid from the sn-1 position of diacyl phospholipid and from the sn-2 position of arachidonate-containing plasmalogen substrates. Therefore, plays an important role in the mobilization of arachidonic acid in response to cellular stimuli and the generation of lipid second messengers. Can also hydrolyze lysophosphatidylcholine. In the mitochondrial compartment, catalyzes the hydrolysis and release of oxidized aliphatic chains from cardiolipin and integrates mitochondrial bioenergetics and signaling. It is essential for maintaining efficient bioenergetic mitochondrial function through tailoring mitochondrial membrane lipid metabolism and composition. This is Calcium-independent phospholipase A2-gamma from Rattus norvegicus (Rat).